Reading from the N-terminus, the 179-residue chain is MGNEASYQTELCNHFDQEEIRRLGKSFRKLDLDKSGSLSIEEFMRLPELQQNPLVGRVIDIFDTDGNGEVDFHEFIVGTSQFSVKGDEEQKLRFAFRIYDMDNDGFISNGELFQVLKMMVGNNLKDWQLQQLVDKSILVLDKDGDGRISFEEFSDVVKTMEIHKKLVVFVEHGQEDLKA.

Gly-2 is lipidated: N-myristoyl glycine. 4 consecutive EF-hand domains span residues 18 to 53 (EEIR…QQNP), 57 to 85 (RVID…FSVK), 87 to 122 (DEEQ…MVGN), and 128 to 163 (QLQQ…MEIH). Positions 31, 33, 35, 37, 42, 63, 65, 67, 69, 74, 100, 102, 104, and 111 each coordinate Ca(2+). Positions 131 to 136 (QLVDKS) are calcineurin A binding. The Ca(2+) site is built by Asp-141, Asp-143, Asp-145, Arg-147, and Glu-152.

It belongs to the calcineurin regulatory subunit family. In terms of assembly, forms a complex composed of a calmodulin-dependent catalytic subunit (also known as calcineurin A) and a regulatory Ca(2+)-binding subunit (also known as calcineurin B). There are three catalytic subunits, each encoded by a separate gene (PPP3CA, PPP3CB, and PPP3CC) and two regulatory subunits which are also encoded by separate genes (PPP3R1 and PPP3R2). Interacts with SPATA33 (via PQIIIT motif). In terms of tissue distribution, expressed in osteoblasts and bone marrow (at protein level). Expressed in the testis. Expressed in the sperm midpiece in a SPATA33-dependent manner (at protein level).

It localises to the mitochondrion. Regulatory subunit of calcineurin, a calcium-dependent, calmodulin stimulated protein phosphatase. Confers calcium sensitivity. This is Calcineurin subunit B type 2 (Ppp3r2) from Mus musculus (Mouse).